Consider the following 125-residue polypeptide: Probable endoribonuclease HigB1 (125 aa).

It belongs to the mycobacterial HigB family.

Functionally, toxic component of an atypical, type II toxin-antitoxin chaperone (TAC) system. Probably an endoribonuclease, neutralized by its cognate antitoxin HigA which also requires SecB-like chaperone MT2006 (AC Q7D7P7). This Mycobacterium tuberculosis (strain CDC 1551 / Oshkosh) protein is Probable endoribonuclease HigB1.